Reading from the N-terminus, the 1251-residue chain is Phospholipid-transporting ATPase IC (1251 aa).

Positions 1-52 (MSTERDSETTFDEESQPNDEVVPYSDDETEDELEDQGSTVEPEQNRVNREAE) are disordered. Topologically, residues 1–121 (MSTERDSETT…LFEQFKRAAN (121 aa)) are cytoplasmic. The segment covering 25–35 (SDDETEDELED) has biased composition (acidic residues). Residues 43–52 (EQNRVNREAE) are compositionally biased toward basic and acidic residues. A helical membrane pass occupies residues 122 to 142 (FYFLILLILQAIPQISTLAWY). Over 143-144 (TT) the chain is Exoplasmic loop. The chain crosses the membrane as a helical span at residues 145–165 (LVPLLLVLGITAIKDLVDDVA). Residues 166 to 339 (RHKMDKEINN…RTKIDYLMNY (174 aa)) lie on the Cytoplasmic side of the membrane. Residues 340-360 (MVYTIFIVLILVSAGLAIGHA) traverse the membrane as a helical segment. The Exoplasmic loop portion of the chain corresponds to 361 to 385 (YWEAQVGNYSWYLYDGENATPSYRG). The helical transmembrane segment at 386–406 (FLNFWGYIIVLNTMVPISLYV) threads the bilayer. The Cytoplasmic portion of the chain corresponds to 407-952 (SVEVIRLGQS…SYIRMCKFLR (546 aa)). Residue Asp-454 is the 4-aspartylphosphate intermediate of the active site. Positions 454, 455, 456, 555, 596, 619, 652, 732, 733, 734, 867, and 873 each coordinate ATP. Asp-454 contacts Mg(2+). Thr-456 is a binding site for Mg(2+). Asp-893 lines the Mg(2+) pocket. ATP contacts are provided by Asn-896 and Asp-897. A Mg(2+)-binding site is contributed by Asp-897. A helical membrane pass occupies residues 953–973 (YFFYKNFAFTLVHFWYSFFNG). The Exoplasmic loop portion of the chain corresponds to 974 to 982 (YSAQTAYED). The helical transmembrane segment at 983-1003 (WFITLYNVLYSSLPVLLMGLL) threads the bilayer. At 1004–1032 (DQDVSDKLSLRFPGLYVVGQRDLLFNYKR) the chain is on the cytoplasmic side. Residues 1033–1053 (FFVSLLHGVLTSMVLFFIPLG) traverse the membrane as a helical segment. The Exoplasmic loop segment spans residues 1054 to 1071 (AYLQTVGQDGEAPSDYQS). A helical membrane pass occupies residues 1072 to 1092 (FAVTVASALVITVNFQIGLDT). At 1093–1094 (SY) the chain is on the cytoplasmic side. The helical transmembrane segment at 1095-1115 (WTFVNAFSIFGSIALYFGIMF) threads the bilayer. Topologically, residues 1116–1142 (DFHSAGIHVLFPSAFQFTGTASNALRQ) are exoplasmic loop. Residues 1143–1163 (PYIWLTIILTVAVCLLPVVAI) form a helical membrane-spanning segment. At 1164 to 1251 (RFLSMTIWPS…TAEYRRTVES (88 aa)) the chain is on the cytoplasmic side. Ser-1223 carries the phosphoserine modification.

Belongs to the cation transport ATPase (P-type) (TC 3.A.3) family. Type IV subfamily. As to quaternary structure, component of a P4-ATPase flippase complex which consists of a catalytic alpha subunit ATP8B1 and an accessory beta subunit TMEM30A. The flippase ATP8B1:TMEM30A complex can form an intermediate phosphoenzyme in vitro. Also interacts with beta subunit TMEM30B. It depends on Mg(2+) as a cofactor. Hepatocytes, bile duct, intestinal epithelial cells (cholangiocytes and ileocytes), and pancreatic acinar cells.

The protein resides in the cell membrane. It localises to the apical cell membrane. Its subcellular location is the cell projection. It is found in the stereocilium. The protein localises to the endoplasmic reticulum. The protein resides in the golgi apparatus. It catalyses the reaction ATP + H2O + phospholipidSide 1 = ADP + phosphate + phospholipidSide 2.. The catalysed reaction is a 1,2-diacyl-sn-glycero-3-phosphocholine(out) + ATP + H2O = a 1,2-diacyl-sn-glycero-3-phosphocholine(in) + ADP + phosphate + H(+). It carries out the reaction a 1,2-diacyl-sn-glycero-3-phospho-L-serine(out) + ATP + H2O = a 1,2-diacyl-sn-glycero-3-phospho-L-serine(in) + ADP + phosphate + H(+). Its function is as follows. Catalytic component of a P4-ATPase flippase complex which catalyzes the hydrolysis of ATP coupled to the transport of phospholipids, in particular phosphatidylcholines (PC), from the outer to the inner leaflet of the plasma membrane. May participate in the establishment of the canalicular membrane integrity by ensuring asymmetric distribution of phospholipids in the canicular membrane. Thus may have a role in the regulation of bile acids transport into the canaliculus, uptake of bile acids from intestinal contents into intestinal mucosa or both and protect hepatocytes from bile salts. Involved in the microvillus formation in polarized epithelial cells; the function seems to be independent from its flippase activity. Participates in correct apical membrane localization of CDC42, CFTR and SLC10A2. Enables CDC42 clustering at the apical membrane during enterocyte polarization through the interaction between CDC42 polybasic region and negatively charged membrane lipids provided by ATP8B1. Together with TMEM30A is involved in uptake of the synthetic drug alkylphospholipid perifosine. Required for the preservation of cochlear hair cells in the inner ear. According PubMed:20852622 is proposed to act as cardiolipin transporter during inflammatory injury; the function is questioned by PubMed:21475228. This Mus musculus (Mouse) protein is Phospholipid-transporting ATPase IC.